A 615-amino-acid chain; its full sequence is Chaperone protein DnaK (615 aa).

T174 is modified (phosphothreonine; by autocatalysis). Residues 581 to 615 are disordered; sequence QAAPKDGAEGDAKSADDNTVDGDFEEVDPNKDDKK. Basic and acidic residues predominate over residues 586 to 596; that stretch reads DGAEGDAKSAD. Acidic residues predominate over residues 598–607; that stretch reads NTVDGDFEEV.

This sequence belongs to the heat shock protein 70 family.

Functionally, acts as a chaperone. In Leuconostoc mesenteroides subsp. mesenteroides (strain ATCC 8293 / DSM 20343 / BCRC 11652 / CCM 1803 / JCM 6124 / NCDO 523 / NBRC 100496 / NCIMB 8023 / NCTC 12954 / NRRL B-1118 / 37Y), this protein is Chaperone protein DnaK.